We begin with the raw amino-acid sequence, 124 residues long: Large ribosomal subunit protein bL12 (124 aa).

This sequence belongs to the bacterial ribosomal protein bL12 family. In terms of assembly, homodimer. Part of the ribosomal stalk of the 50S ribosomal subunit. Forms a multimeric L10(L12)X complex, where L10 forms an elongated spine to which 2 to 4 L12 dimers bind in a sequential fashion. Binds GTP-bound translation factors.

Forms part of the ribosomal stalk which helps the ribosome interact with GTP-bound translation factors. Is thus essential for accurate translation. This is Large ribosomal subunit protein bL12 from Ralstonia pickettii (strain 12J).